Consider the following 1435-residue polypeptide: MAQCVQSVQELIPDSFVPCVAALCSDEAERLTRLNHLSFAELLKPFSRLTSEVHMRDPNNQLHVIKNLKIAVSNIVTQPPQPGAIRKLLNDVVSGSQPAEGLVANVITAGDYDLNISATTPWFESYRETFLQSMPALDHEFLNHYLACMLVASSSEAEPVEQFSKLSQEQHRIQHNSDYSYPKWFIPNTLKYYVLLHDVSAGDEQRAESIYEEMKQKYGTQGCYLLKINSRTSNRASDEQIPDPWSQYLQKNSIQNQESYEDGPCTITSNKNSDNNLLSLDGLDNEVKDGLPNNFRAHPLQLEQSSDPSNSIDGPDHLRSASSLHETKKGNTGIIHGACLTLTDHDRIRQFIQEFTFRGLLPHIEKTIRQLNDQLISRKGLSRSLFSATKKWFSGSKVPEKSINDLKNTSGLLYPPEAPELQIRKMADLCFLVQHYDLAYSCYHTAKKDFLNDQAMLYAAGALEMAAVSAFLQPGAPRPYPAHYMDTAIQTYRDICKNMVLAERCVLLSAELLKSQSKYSEAAALLIRLTSEDSDLRSALLLEQAAHCFINMKSPMVRKYAFHMILAGHRFSKAGQKKHALRCYCQAMQVYKGKGWSLAEDHINFTIGRQSYTLRQLDNAVSAFRHILINESKQSAAQQGAFLREYLYVYKNVSQLSPDGPLPQLPLPYINSSATRVFFGHDRRPADGEKQAATHVSLDQEYDSESSQQWRELEEQVVSVVNKGVIPSNFHPTQYCLNSYSDNSRFPLAVVEEPITVEVAFRNPLKVLLLLTDLSLLWKFHPKDFSGKDNEEVKQLVTSEPEMIGAEVISEFLINGEESKVARLKLFPHHIGELHILGVVYNLGTIQGSMTVDGIGALPGCHTGKYSLSMSVRGKQDLEIQGPRLNNTKEEKTSVKYGPDRRLDPIITEEMPLLEVFFIHFPTGLLCGEIRKAYVEFVNVSKCPLTGLKVVSKRPEFFTFGGNTAVLTPLSPSASENCSAYKTVVTDATSVCTALISSASSVDFGIGTGSQPEVIPVPLPDTVLLPGASVQLPMWLRGPDEEGVHEINFLFYYESVKKQPKIRHRILRHTAIICTSRSLNVRATVCRSNSLENEEGRGGNMLVFVDVENTNTSEAGVKEFHIVQVSSSSKHWKLQKSVNLSENKDTKLASREKGKFCFKAIRCEKEEAATQSSEKYTFADIIFGNEQIISSASPCADFFYRSLSSELKKPQAHLPVHTEKQSTEDAVRLIQKCSEVDLNIVILWKAYVVEDSKQLILEGQHHVILRTIGKEAFSYPQKQEPPEMELLKFFRPENITVSSRPSVEQLSSLIKTSLHYPESFNHPFHQKSLCLVPVTLLLSNCSKADVDVIVDLRHKTTSPEALEIHGSFTWLGQTQYKLQLKSQEIHSLQLKACFVHTGVYNLGTPRVFAKLSDQVTVFETSQQNSMPALIIISNV.

S273, S279, and S309 each carry phosphoserine. Residues 301–321 form a disordered region; that stretch reads QLEQSSDPSNSIDGPDHLRSA. Positions 302-312 are enriched in polar residues; it reads LEQSSDPSNSI.

It belongs to the TRS85 family. As to quaternary structure, component of the multisubunit TRAPP (transport protein particle) complex, which includes TRAPPC2, TRAPPC2L, TRAPPC3, TRAPPC3L, TRAPPC4, TRAPPC5, TRAPPC8, TRAPPC9, TRAPPC10, TRAPPC11 and TRAPPC12. Interacts with TBC1D14. Interacts (via C-terminus) with TMEM131 (via C-terminus); the interaction is direct and is involved in collagen secretion.

The protein resides in the golgi apparatus. The protein localises to the cis-Golgi network. In terms of biological role, plays a role in endoplasmic reticulum to Golgi apparatus trafficking at a very early stage. Maintains together with TBC1D14 the cycling pool of ATG9 required for initiation of autophagy. Involved in collagen secretion. The protein is Trafficking protein particle complex subunit 8 (TRAPPC8) of Homo sapiens (Human).